Consider the following 107-residue polypeptide: Cytochrome c2 (107 aa).

Gln1 is subject to Pyrrolidone carboxylic acid. Residues Cys13, Cys16, His17, and Met79 each contribute to the heme c site.

It belongs to the cytochrome c family. Post-translationally, binds 1 heme c group covalently per subunit.

It localises to the periplasm. In terms of biological role, cytochrome c2 is found mainly in purple, non-sulfur, photosynthetic bacteria where it functions as the electron donor to the oxidized bacteriochlorophyll in the photophosphorylation pathway. However, it may also have a role in the respiratory chain and is found in some non-photosynthetic bacteria. This chain is Cytochrome c2, found in Rhodoplanes tepidamans (Rhodoplanes cryptolactis).